A 130-amino-acid chain; its full sequence is Small ribosomal subunit protein uS9 (130 aa).

The interval 107–130 is disordered; the sequence is DSRKVERKKPGLKKARKASQFSKR. The segment covering 111–130 has biased composition (basic residues); the sequence is VERKKPGLKKARKASQFSKR.

The protein belongs to the universal ribosomal protein uS9 family.

This is Small ribosomal subunit protein uS9 from Streptococcus sanguinis (strain SK36).